Reading from the N-terminus, the 309-residue chain is WD repeat domain phosphoinositide-interacting protein 4 (309 aa).

The stretch at 4 to 42 is one WD 1 repeat; the sequence is QPLRGVTSLHFNQDQSCFCCAMETGVRIYNVEPLMEKGH. A L/FRRG motif motif is present at residues 180–183; that stretch reads LRRG. Residues 184–223 form a WD 2 repeat; the sequence is TDPATLYCINFSHDSSFLCASSDKGTVHIFALKDTRLNRR.

This sequence belongs to the WD repeat PROPPIN family. Interacts with WIPI1. Interacts with WIPI2. Interacts with ATG2A and ATG2B. Interacts with ULK1. May interact with the PRKAA1, PRKAA2, PRKAB1 and PRKAG1 subunits of the AMPK kinase. May interact with NUDC.

It localises to the preautophagosomal structure. It is found in the cytoplasm. Its function is as follows. Component of the autophagy machinery that controls the major intracellular degradation process by which cytoplasmic materials are packaged into autophagosomes and delivered to lysosomes for degradation. Binds phosphatidylinositol 3-phosphate (PtdIns3P). Activated by the STK11/AMPK signaling pathway upon starvation, WDR45 is involved in autophagosome assembly downstream of WIPI2, regulating the size of forming autophagosomes. Together with WIPI1, promotes ATG2 (ATG2A or ATG2B)-mediated lipid transfer by enhancing ATG2-association with phosphatidylinositol 3-monophosphate (PI3P)-containing membranes. Probably recruited to membranes through its PtdIns3P activity. This Rattus norvegicus (Rat) protein is WD repeat domain phosphoinositide-interacting protein 4 (Wdr45).